Here is a 538-residue protein sequence, read N- to C-terminus: Phosphoenolpyruvate carboxykinase (ATP) (538 aa).

Substrate contacts are provided by Arg64, Tyr205, and Lys211. Residues Lys211, His230, and 246–254 (GLSGTGKTT) each bind ATP. Residues Lys211 and His230 each coordinate Mn(2+). Asp267 lines the Mn(2+) pocket. ATP contacts are provided by residues Glu295, Arg331, 447-448 (RI), and Thr453. Arg331 contributes to the substrate binding site.

Belongs to the phosphoenolpyruvate carboxykinase (ATP) family. Monomer. It depends on Mn(2+) as a cofactor.

It localises to the cytoplasm. The enzyme catalyses oxaloacetate + ATP = phosphoenolpyruvate + ADP + CO2. It functions in the pathway carbohydrate biosynthesis; gluconeogenesis. Functionally, involved in the gluconeogenesis. Catalyzes the conversion of oxaloacetate (OAA) to phosphoenolpyruvate (PEP) through direct phosphoryl transfer between the nucleoside triphosphate and OAA. The sequence is that of Phosphoenolpyruvate carboxykinase (ATP) from Haemophilus influenzae (strain ATCC 51907 / DSM 11121 / KW20 / Rd).